We begin with the raw amino-acid sequence, 425 residues long: Inhibin beta A chain (425 aa).

Positions 1–20 (MPLLWLRGFLLASCWIIVRS) are cleaved as a signal peptide. The propeptide occupies 21–309 (SPTPGSEGHS…EDHPHRRRRR (289 aa)). Asn165 carries an N-linked (GlcNAc...) asparagine glycan. Residues 259-289 (KKKKKEEEGEGKKRDGEGGAGGDEEKEQSHR) form a disordered region. The segment covering 263-275 (KEEEGEGKKRDGE) has biased composition (basic and acidic residues). 4 disulfides stabilise this stretch: Cys313–Cys321, Cys320–Cys390, Cys349–Cys422, and Cys353–Cys424.

Belongs to the TGF-beta family. Dimeric, linked by one or more disulfide bonds. Inhibin A is a dimer of alpha/INHA and beta-A/INHBA. Activin A is a homodimer of beta-A/INHBA. Activin AB is a dimer of beta-A/INHBA and beta-B/INHBB. Interacts with FST and FSTL3; these interactions prevent activin A interaction to its type II receptor. Activin A interacts with ACVR2A. Activin A interacts with BMPR2. Inhibin A interacts with ACVR1; this interaction creates a non-signaling complex (NSC) that inhibits ACVR1-mediated BMP signaling. Inhibin A interacts with ACVR2A.

Its subcellular location is the secreted. In terms of biological role, inhibins/activins are involved in regulating a number of diverse functions such as hypothalamic and pituitary hormone secretion, gonadal hormone secretion, germ cell development and maturation, erythroid differentiation, insulin secretion, nerve cell survival, embryonic axial development or bone growth, depending on their subunit composition. Functionally, activin A is a homodimer of INHBA that plays a role in several essential biological processes including embryonic development, stem cell maintenance and differentiation, haematopoiesis, cell proliferation and tissue fibrosis. Signals through type I (such as ACVR1B or ACVR1C) and type II receptors (such as ACVR2A, ACVR2B or BMPR2) which, upon ligand binding, phosphorylate SMAD2 and SMAD3 intracellular signaling mediators that form a complex with SMAD4, translocate to the nucleus and modulate gene expression. Can also activate alternative non-canonical intracellular signaling pathways including the p38 MAPK, extracellular signal-regulated kinases 1/2 (ERK1/2) and c-Jun N-terminal kinases (JNKs) to modulate cell migration and differentiation. Alternatively, promotes osteoblastic differentiation via ACVRL1-SMAD1/5/9 pathway. In addition, can engage the type I receptor ACVR1 to form an ACVR1-activin A-type II receptor non-signaling complex (NSC) that renders receptors unavailable for engagement with BMPs, hence resulting in an apparent inhibition of ACVR1-mediated BMP signaling. Its function is as follows. Inhibin A is a dimer of alpha/INHA and beta-A/INHBA that functions as a feedback regulator in the hypothalamic-pituitary-gonadal (HPG) axis. Inhibits the secretion of FSH from the anterior pituitary gland by acting on pituitary gonadotrope cells. Antagonizes activin A by binding to the proteoglycan, betaglycan, and forming a stable complex with and, thereby, sequestering type II activin receptors while excluding type I receptor. This Bos taurus (Bovine) protein is Inhibin beta A chain (INHBA).